A 179-amino-acid polypeptide reads, in one-letter code: MAKLHDKYQETVVAELAKKFGYTSVMQVPRIEKITLNMGVGEAVADKKVMEHALRDMTAIAGQKPVVTVARKSVAGFKIREGYPIGCKVTLRGERMWEFLERLVDIAIPRIRDFRGLSAKAFDGRGNYAMGVREQIIFPEIDYDKIDKIRGMDIVITTSAKTDEEGRALLDAFNFPFKK.

This sequence belongs to the universal ribosomal protein uL5 family. As to quaternary structure, part of the 50S ribosomal subunit; part of the 5S rRNA/L5/L18/L25 subcomplex. Contacts the 5S rRNA and the P site tRNA. Forms a bridge to the 30S subunit in the 70S ribosome.

Its function is as follows. This is one of the proteins that bind and probably mediate the attachment of the 5S RNA into the large ribosomal subunit, where it forms part of the central protuberance. In the 70S ribosome it contacts protein S13 of the 30S subunit (bridge B1b), connecting the 2 subunits; this bridge is implicated in subunit movement. Contacts the P site tRNA; the 5S rRNA and some of its associated proteins might help stabilize positioning of ribosome-bound tRNAs. This Shewanella putrefaciens (strain CN-32 / ATCC BAA-453) protein is Large ribosomal subunit protein uL5.